The primary structure comprises 230 residues: Large ribosomal subunit protein uL1 (230 aa).

It belongs to the universal ribosomal protein uL1 family. Part of the 50S ribosomal subunit.

Its function is as follows. Binds directly to 23S rRNA. The L1 stalk is quite mobile in the ribosome, and is involved in E site tRNA release. Protein L1 is also a translational repressor protein, it controls the translation of the L11 operon by binding to its mRNA. The chain is Large ribosomal subunit protein uL1 from Leptospira interrogans serogroup Icterohaemorrhagiae serovar copenhageni (strain Fiocruz L1-130).